Consider the following 619-residue polypeptide: Sodium-coupled monocarboxylate transporter 2 (619 aa).

At M1–W9 the chain is on the extracellular side. A helical transmembrane segment spans residues D10–I30. Residues K31 to Q47 are Cytoplasmic-facing. The chain crosses the membrane as a helical span at residues M48–L68. Topologically, residues G69 to S80 are extracellular. The helical transmembrane segment at F81–P101 threads the bilayer. Over V102–T128 the chain is Cytoplasmic. The helical transmembrane segment at I129–A149 threads the bilayer. At L150 to N157 the chain is on the extracellular side. The helical transmembrane segment at L158–L178 threads the bilayer. At K179–A180 the chain is on the cytoplasmic side. The helical transmembrane segment at V181–I201 threads the bilayer. Residues Q202–R235 lie on the Extracellular side of the membrane. N-linked (GlcNAc...) asparagine glycosylation is present at N219. The chain crosses the membrane as a helical span at residues H236–N256. The Cytoplasmic portion of the chain corresponds to Q257–A275. A helical membrane pass occupies residues L276–I296. Over M297 to Y321 the chain is Extracellular. The helical transmembrane segment at F322 to F342 threads the bilayer. Topologically, residues S343–C385 are cytoplasmic. Residues I386–V406 traverse the membrane as a helical segment. The Extracellular portion of the chain corresponds to Q407–S411. Residues I412–F432 form a helical membrane-spanning segment. Topologically, residues V433–G437 are cytoplasmic. A helical membrane pass occupies residues A438–I458. Residues Y459–Y504 lie on the Extracellular side of the membrane. N480 carries N-linked (GlcNAc...) asparagine glycosylation. The chain crosses the membrane as a helical span at residues L505–L525. The Cytoplasmic portion of the chain corresponds to T526–F619.

It belongs to the sodium:solute symporter (SSF) (TC 2.A.21) family. In terms of tissue distribution, expressed in the cortical region of the kidney corresponding to the proximal tubule. Expressed in Mueller cells of the inner retina (at protein level). Isoform 1 is expressed in the retina, kidney, small intestine and skeletal muscle. Isoform 2 is not detected in the kidney, small intestine and skeletal muscle. In the kidney, expressed predominantly in tubular epithelial cells of the cortical region and in the convoluted portions of the proximal tubule (pars convoluta). In the small intestine, its expression is highest in the proximal part and gradually decreased towards the distal end. Expressed in the neural retina. Not detected in the caecum and colon.

It localises to the apical cell membrane. The catalysed reaction is (S)-lactate(out) + Na(+)(out) = (S)-lactate(in) + Na(+)(in). It carries out the reaction nicotinate(out) + Na(+)(out) = nicotinate(in) + Na(+)(in). The enzyme catalyses pyruvate(out) + Na(+)(out) = pyruvate(in) + Na(+)(in). It catalyses the reaction propanoate(out) + Na(+)(out) = propanoate(in) + Na(+)(in). The catalysed reaction is butanoate(out) + Na(+)(out) = butanoate(in) + Na(+)(in). It carries out the reaction acetoacetate(out) + Na(+)(out) = acetoacetate(in) + Na(+)(in). Its function is as follows. Acts as an electroneutral and low-affinity sodium (Na(+))-dependent sodium-coupled solute transporter. Catalyzes the transport across the plasma membrane of many monocarboxylates such as lactate, pyruvate, nicotinate, propionate, butyrate and beta-D-hydroxybutyrate. May be responsible for the first step of reabsorption of monocarboxylates from the lumen of the proximal tubule of the kidney and the small intestine. May play also a role in monocarboxylates transport in the retina. Mediates electroneutral uptake of lactate, with a stoichiometry of 2 Na(+) for each lactate. This is Sodium-coupled monocarboxylate transporter 2 (Slc5a12) from Mus musculus (Mouse).